Reading from the N-terminus, the 425-residue chain is Tyrosine--tRNA ligase (425 aa).

Y37 lines the L-tyrosine pocket. Positions 42–51 (PTADSLHLGH) match the 'HIGH' region motif. 2 residues coordinate L-tyrosine: Y175 and Q179. The 'KMSKS' region motif lies at 235-239 (KFGKT). Residue K238 participates in ATP binding. Residues 357 to 415 (QDLQQALVNAELAPSRGQARKLIEAKSVSINGSLQTDAEYTFGEDDRLFGQYTLLRRGK) form the S4 RNA-binding domain.

Belongs to the class-I aminoacyl-tRNA synthetase family. TyrS type 1 subfamily. In terms of assembly, homodimer.

It is found in the cytoplasm. It catalyses the reaction tRNA(Tyr) + L-tyrosine + ATP = L-tyrosyl-tRNA(Tyr) + AMP + diphosphate + H(+). Functionally, catalyzes the attachment of tyrosine to tRNA(Tyr) in a two-step reaction: tyrosine is first activated by ATP to form Tyr-AMP and then transferred to the acceptor end of tRNA(Tyr). The sequence is that of Tyrosine--tRNA ligase from Erwinia tasmaniensis (strain DSM 17950 / CFBP 7177 / CIP 109463 / NCPPB 4357 / Et1/99).